We begin with the raw amino-acid sequence, 157 residues long: Immediate-early protein ICP-18 (157 aa).

In Frog virus 3 (isolate Goorha) (FV-3), this protein is Immediate-early protein ICP-18.